A 509-amino-acid polypeptide reads, in one-letter code: Probable glycine dehydrogenase (decarboxylating) subunit 2 (509 aa).

Lys-278 carries the post-translational modification N6-(pyridoxal phosphate)lysine.

It belongs to the GcvP family. C-terminal subunit subfamily. In terms of assembly, the glycine cleavage system is composed of four proteins: P, T, L and H. In this organism, the P 'protein' is a heterodimer of two subunits. It depends on pyridoxal 5'-phosphate as a cofactor.

It carries out the reaction N(6)-[(R)-lipoyl]-L-lysyl-[glycine-cleavage complex H protein] + glycine + H(+) = N(6)-[(R)-S(8)-aminomethyldihydrolipoyl]-L-lysyl-[glycine-cleavage complex H protein] + CO2. Its function is as follows. The glycine cleavage system catalyzes the degradation of glycine. The P protein binds the alpha-amino group of glycine through its pyridoxal phosphate cofactor; CO(2) is released and the remaining methylamine moiety is then transferred to the lipoamide cofactor of the H protein. This chain is Probable glycine dehydrogenase (decarboxylating) subunit 2, found in Saccharolobus islandicus (strain Y.N.15.51 / Yellowstone #2) (Sulfolobus islandicus).